Here is a 487-residue protein sequence, read N- to C-terminus: Glutamyl-tRNA(Gln) amidotransferase subunit A (487 aa).

Active-site charge relay system residues include Lys-80 and Ser-155. Ser-179 serves as the catalytic Acyl-ester intermediate.

This sequence belongs to the amidase family. GatA subfamily. As to quaternary structure, heterotrimer of A, B and C subunits.

The enzyme catalyses L-glutamyl-tRNA(Gln) + L-glutamine + ATP + H2O = L-glutaminyl-tRNA(Gln) + L-glutamate + ADP + phosphate + H(+). In terms of biological role, allows the formation of correctly charged Gln-tRNA(Gln) through the transamidation of misacylated Glu-tRNA(Gln) in organisms which lack glutaminyl-tRNA synthetase. The reaction takes place in the presence of glutamine and ATP through an activated gamma-phospho-Glu-tRNA(Gln). The chain is Glutamyl-tRNA(Gln) amidotransferase subunit A from Leptospira interrogans serogroup Icterohaemorrhagiae serovar copenhageni (strain Fiocruz L1-130).